The following is a 766-amino-acid chain: 5-methyltetrahydropteroyltriglutamate--homocysteine methyltransferase (766 aa).

5-methyltetrahydropteroyltri-L-glutamate contacts are provided by residues 16–19 and Lys117; that span reads RELK. L-homocysteine contacts are provided by residues 442 to 444 and Glu495; that span reads IGS. Residues 442 to 444 and Glu495 contribute to the L-methionine site; that span reads IGS. 5-methyltetrahydropteroyltri-L-glutamate contacts are provided by residues 526–527 and Trp572; that span reads RC. Residue Asp610 participates in L-homocysteine binding. Asp610 lines the L-methionine pocket. Residue Glu616 participates in 5-methyltetrahydropteroyltri-L-glutamate binding. His652, Cys654, and Glu676 together coordinate Zn(2+). His705 (proton donor) is an active-site residue. Cys737 contributes to the Zn(2+) binding site.

This sequence belongs to the vitamin-B12 independent methionine synthase family. Zn(2+) serves as cofactor.

It catalyses the reaction 5-methyltetrahydropteroyltri-L-glutamate + L-homocysteine = tetrahydropteroyltri-L-glutamate + L-methionine. It participates in amino-acid biosynthesis; L-methionine biosynthesis via de novo pathway; L-methionine from L-homocysteine (MetE route): step 1/1. Catalyzes the transfer of a methyl group from 5-methyltetrahydrofolate to homocysteine resulting in methionine formation. In Bordetella avium (strain 197N), this protein is 5-methyltetrahydropteroyltriglutamate--homocysteine methyltransferase.